Consider the following 348-residue polypeptide: GMP reductase 2 (348 aa).

Residues serine 26–arginine 27, lysine 78, aspartate 129–alanine 131, and isoleucine 180–glycine 181 contribute to the NADP(+) site. The K(+) site is built by glycine 181, glycine 183, and cysteine 186. Cysteine 186 functions as the Thioimidate intermediate in the catalytic mechanism. Threonine 188 serves as the catalytic Proton donor/acceptor. Position 189 (arginine 189) interacts with K(+). GMP-binding positions include aspartate 219 to glycine 221, glycine 242 to glycine 243, glycine 268 to serine 270, and arginine 286 to glycine 290. Residues methionine 269 and tyrosine 285 to arginine 286 contribute to the NADP(+) site. N6-acetyllysine is present on lysine 291. NADP(+) is bound at residue serine 314–threonine 317.

It belongs to the IMPDH/GMPR family. GuaC type 1 subfamily. Homotetramer.

The catalysed reaction is IMP + NH4(+) + NADP(+) = GMP + NADPH + 2 H(+). Functionally, catalyzes the irreversible NADPH-dependent deamination of GMP to IMP. It functions in the conversion of nucleobase, nucleoside and nucleotide derivatives of G to A nucleotides, and in maintaining the intracellular balance of A and G nucleotides. Plays a role in modulating cellular differentiation. This Bos taurus (Bovine) protein is GMP reductase 2.